The primary structure comprises 246 residues: Neuromodulin (246 aa).

Residues 1-246 (MLCCMRRTKQ…EESKADQENA (246 aa)) are disordered. Residues C3 and C4 are each lipidated (S-palmitoyl cysteine). Residues 9-33 (KQVEKNEDGDQKIEQDGIKPEDKAH) show a composition bias toward basic and acidic residues. An IQ domain is found at 32-61 (AHKAATKIQASFRGHITRKKLKGEKKADAP). 2 stretches are compositionally biased toward low complexity: residues 87–99 (ASAATEASAADSA) and 125–157 (SEQPAPQAATPAASSEEKPAAAAETESATKAST). Residues 164–176 (KADEAQDKEEPKQ) show a composition bias toward basic and acidic residues. Low complexity predominate over residues 177-203 (ADVPAADTTATTTPAAEDATAKATAQP). 2 stretches are compositionally biased toward basic and acidic residues: residues 213–225 (TEEKTDAVEETKP) and 237–246 (EESKADQENA).

Belongs to the neuromodulin family. Binds calmodulin with a greater affinity in the absence of Ca(2+) than in its presence. In terms of processing, palmitoylated. Palmitoylation is essential for plasma membrane association. In terms of tissue distribution, expressed in neurons.

The protein resides in the cell membrane. The protein localises to the cell projection. It localises to the growth cone membrane. Its subcellular location is the synapse. It is found in the filopodium membrane. Its function is as follows. This protein is associated with nerve growth. It is a major component of the motile 'growth cones' that form the tips of elongating axons. Plays a role in axonal and dendritic filopodia induction. The chain is Neuromodulin (GAP43) from Gallus gallus (Chicken).